Here is a 995-residue protein sequence, read N- to C-terminus: S1 RNA-binding domain-containing protein 1 (995 aa).

A disordered region spans residues 23–81 (SFSELSSASEEDDKEDSAWEPQKKVPRSRKQPPPKESKPKRMPRVKKNAPQISDGSEVV). Glycyl lysine isopeptide (Lys-Gly) (interchain with G-Cter in SUMO2) cross-links involve residues Lys84 and Lys134. A disordered region spans residues 120–165 (CAAQPHTVRRTKKLKVEEETSKASNLEGESNSSETPSTSTVWGGTC). Residues 146-159 (EGESNSSETPSTST) are compositionally biased toward low complexity. Residues Lys166, Lys167, and Lys183 each participate in a glycyl lysine isopeptide (Lys-Gly) (interchain with G-Cter in SUMO2) cross-link. A Glycyl lysine isopeptide (Lys-Gly) (interchain with G-Cter in SUMO1); alternate cross-link involves residue Lys185. A Glycyl lysine isopeptide (Lys-Gly) (interchain with G-Cter in SUMO2); alternate cross-link involves residue Lys185. Residues 258-288 (ADSLREVQQTLEELRAVAKKVHSTIQKIKKE) adopt a coiled-coil conformation. Ser861 bears the Phosphoserine mark. One can recognise an S1 motif domain in the interval 919-992 (GTVLTGKVEN…PRSRITLDLI (74 aa)). A Glycyl lysine isopeptide (Lys-Gly) (interchain with G-Cter in SUMO2) cross-link involves residue Lys955. Ser964 bears the Phosphoserine mark.

The polypeptide is S1 RNA-binding domain-containing protein 1 (SRBD1) (Homo sapiens (Human)).